The sequence spans 221 residues: Probable lipoprotein CT_734 (221 aa).

A signal peptide spans 1-24; sequence MKKFIYKYSFGALLLLSGLSGLSS. Cys25 carries N-palmitoyl cysteine lipidation. Residue Cys25 is the site of S-diacylglycerol cysteine attachment.

It belongs to the chlamydial CPn_0875/CT_734/TC_0107 family.

The protein localises to the cell membrane. In Chlamydia trachomatis serovar D (strain ATCC VR-885 / DSM 19411 / UW-3/Cx), this protein is Probable lipoprotein CT_734.